Here is a 218-residue protein sequence, read N- to C-terminus: ATP-dependent dethiobiotin synthetase BioD (218 aa).

10 to 15 (NAGKTT) is a binding site for ATP. T14 is a Mg(2+) binding site. K35 is a catalytic residue. T39 lines the substrate pocket. Positions 52 and 116 each coordinate Mg(2+). ATP contacts are provided by residues 116-119 (EGAG) and 176-177 (LR).

This sequence belongs to the dethiobiotin synthetase family. In terms of assembly, homodimer. Requires Mg(2+) as cofactor.

It localises to the cytoplasm. The enzyme catalyses (7R,8S)-7,8-diammoniononanoate + CO2 + ATP = (4R,5S)-dethiobiotin + ADP + phosphate + 3 H(+). The protein operates within cofactor biosynthesis; biotin biosynthesis; biotin from 7,8-diaminononanoate: step 1/2. Functionally, catalyzes a mechanistically unusual reaction, the ATP-dependent insertion of CO2 between the N7 and N8 nitrogen atoms of 7,8-diaminopelargonic acid (DAPA, also called 7,8-diammoniononanoate) to form a ureido ring. This chain is ATP-dependent dethiobiotin synthetase BioD, found in Helicobacter pylori (strain Shi470).